The sequence spans 450 residues: UDP-N-acetylmuramoylalanine--D-glutamate ligase (450 aa).

119–125 (GSNGKTT) lines the ATP pocket.

This sequence belongs to the MurCDEF family.

The protein resides in the cytoplasm. It carries out the reaction UDP-N-acetyl-alpha-D-muramoyl-L-alanine + D-glutamate + ATP = UDP-N-acetyl-alpha-D-muramoyl-L-alanyl-D-glutamate + ADP + phosphate + H(+). The protein operates within cell wall biogenesis; peptidoglycan biosynthesis. Cell wall formation. Catalyzes the addition of glutamate to the nucleotide precursor UDP-N-acetylmuramoyl-L-alanine (UMA). The chain is UDP-N-acetylmuramoylalanine--D-glutamate ligase from Streptococcus pneumoniae (strain CGSP14).